A 386-amino-acid polypeptide reads, in one-letter code: MFRHIRPVWAEIDLDNIAYNMQQIRRCSKSDEIIGVVKADAYGHGAVDVAPVLLENGANRLAVAVISEAVELRKSGIQCPIMILGYTPLSLVDSIIKYSIEQTVFSYDYAEKLSEAARQKNITLRIHIALDTGMGRIGFLPTEESVWEVYKISKLSNIIIEGIFSHFSTSDETNKEYTYAQLKKFEWFYNELRKKNIKINIRHIGNSAAIMELPETHFEATRPGIILYGYYPSNEVDKNKLNLKPIMTLKTNVVHIKKMMPGEYVSYGRKFKCERESIIATLPVGYADGYTRMLSGKAKVIINGNYAPVIGRICMDQCMIDITDLPSVQVGDEVVIMGESDDKKFTADDMAEIIGTINYEVICMISKRVPRVYIKNGEVVKIRNYV.

Lysine 38 functions as the Proton acceptor; specific for D-alanine in the catalytic mechanism. Lysine 38 is modified (N6-(pyridoxal phosphate)lysine). Arginine 136 serves as a coordination point for substrate. Tyrosine 267 acts as the Proton acceptor; specific for L-alanine in catalysis. Methionine 315 serves as a coordination point for substrate.

The protein belongs to the alanine racemase family. It depends on pyridoxal 5'-phosphate as a cofactor.

It catalyses the reaction L-alanine = D-alanine. It participates in amino-acid biosynthesis; D-alanine biosynthesis; D-alanine from L-alanine: step 1/1. Its function is as follows. Catalyzes the interconversion of L-alanine and D-alanine. May also act on other amino acids. This chain is Alanine racemase 1 (alr1), found in Clostridium acetobutylicum (strain ATCC 824 / DSM 792 / JCM 1419 / IAM 19013 / LMG 5710 / NBRC 13948 / NRRL B-527 / VKM B-1787 / 2291 / W).